Consider the following 247-residue polypeptide: GTP cyclohydrolase 1 type 2 homolog (247 aa).

A divalent metal cation is bound by residues histidine 63, histidine 64, aspartate 101, histidine 215, and glutamate 219.

It belongs to the GTP cyclohydrolase I type 2/NIF3 family. Toroid-shaped homohexamer. In the hexamer, 3 dimers assemble to form a ring-like structure surrounding a central hole.

Functionally, provides significant protection from radiation damage and may be involved in the degradation of radiation-damaged nucleotides. This Escherichia coli O157:H7 protein is GTP cyclohydrolase 1 type 2 homolog (ybgI).